A 215-amino-acid chain; its full sequence is Large ribosomal subunit protein uL3 (215 aa).

Gln-156 is modified (N5-methylglutamine).

The protein belongs to the universal ribosomal protein uL3 family. In terms of assembly, part of the 50S ribosomal subunit. Forms a cluster with proteins L14 and L19. In terms of processing, methylated by PrmB.

In terms of biological role, one of the primary rRNA binding proteins, it binds directly near the 3'-end of the 23S rRNA, where it nucleates assembly of the 50S subunit. In Xylella fastidiosa (strain M12), this protein is Large ribosomal subunit protein uL3.